Reading from the N-terminus, the 33-residue chain is Photosystem II reaction center protein Psb30 (33 aa).

Residues 5–25 form a helical membrane-spanning segment; sequence LIVQLGSLALITVAGPAIIVL.

It belongs to the Psb30/Ycf12 family. As to quaternary structure, PSII is composed of 1 copy each of membrane proteins PsbA, PsbB, PsbC, PsbD, PsbE, PsbF, PsbH, PsbI, PsbJ, PsbK, PsbL, PsbM, PsbT, PsbY, PsbZ, Psb30/Ycf12, peripheral proteins of the oxygen-evolving complex and a large number of cofactors. It forms dimeric complexes.

The protein resides in the plastid. The protein localises to the chloroplast thylakoid membrane. A core subunit of photosystem II (PSII), probably helps stabilize the reaction center. In Euglena stellata, this protein is Photosystem II reaction center protein Psb30.